Consider the following 605-residue polypeptide: MAIYQVIPYGLPVPPNTPHAILVSLPTWNDTVTCIEGEDAETRLSGYPRFFIQVAIRKLASLMERKYGLDGERCMLFPSYRVAEQCRLFVQASFSGVRVVSLLVCQEDNKNARIVECKEDTGLSMQPASENHLHIVLFPTDALPVAKLFWQFTGTGISSRFADHWLSTLPDDVVRTNGISGSTSVQYLTNKSPGDYSVGLELTPLPDAASAKYVLRQRIAGALNVYDRQGGPYAVQENLQVGPNSHGIADVSENDVYLFPTGMCAIWNAHRLSLAVRSAEKSVCFGFVYCDTLKVLEKWGPGCHFFPEGNDYDIDQLEVILEQESARDSTKPPILALYTEFPSNPLLRSPNLPRLRALADKYDFLMVIDDTLGNFVNVDVLPYADIVVTSLSKIFSGSANVMGGSLVLNTNGHHYTALAAYMTAHYEDTYYDEDAICMEQNSRDLQQRIKIIDTNAEALCDFLRSHSVAAGAAKSVIKEVFYPKYKTPENYERCRKTVSNHNASLSSSNEVGGYGGLFSITFISNAASRAFYESLDCFRAPSLGTNFTLAVLYTILAHHDELEWAAQCGVEEGLVRVSVGMENTETLLKVFEVALSTAKKAVATA.

A substrate-binding site is contributed by Y289. K393 bears the N6-(pyridoxal phosphate)lysine mark.

This sequence belongs to the trans-sulfuration enzymes family. Requires pyridoxal 5'-phosphate as cofactor.

It participates in secondary metabolite biosynthesis. In terms of biological role, cystathionine gamma-synthase-like enzyme; part of the gene cluster that mediates the biosynthesis of the psychoactive metabolites ibotenic acid and muscimol. The first committed step is glutamate hydroxylation by the 2-oxoglutarate-dependent dioxygenase iboH, and the last step is decarboxylation of ibotenic acid to muscimol by the decarboxylase iboD. The order of the intermediate reactions is somewhat ambiguous. IboA likely activates the carboxylic acid at position 5 to introduce an amide bond, and the flavin monooxygenase iboF generates the N-O bond. There are several options for the latter step. One option is that iboF directly hydroxylates the amide nitrogen formed by iboA to produce a hydroxamic acid species. Another option is that iboF hydroxylates an external N-containing compound, whose resulting N-O bond is subsequently introduced into the hydroxyglutamate scaffold. The paralogous PLP-dependent cystathionine gamma-synthase-like enzymes iboG1 and iboG2 are likely involved in substitution of the OH group at position 3 by the O-N moiety. The first cyclic intermediate is most probably tricholomic acid which is likely desaturated to ibotenic acid by the cytochrome P450 monooxygenase iboC. The protein is Cystathionine gamma-synthase-like enzyme iboG1 (iboG1) of Amanita muscaria (strain Koide BX008).